A 1788-amino-acid chain; its full sequence is Protein Shroom3 (1788 aa).

Disordered stretches follow at residues Met1–Asp25, Glu146–Leu174, Lys225–Pro263, Gly321–Gly367, Pro382–Leu401, Asn469–His488, Thr498–Leu548, Glu727–Thr768, Thr793–Thr821, Thr876–Ser915, Ser1011–Asn1067, Ser1086–Lys1133, Lys1171–Glu1263, Asp1303–Leu1324, Val1404–Gln1467, and Ala1507–Thr1538. Polar residues-rich tracts occupy residues Val147–Pro161 and His230–Gln240. Composition is skewed to basic and acidic residues over residues Val245–Pro259 and Ser357–Glu366. Over residues Asn476–His488 the composition is skewed to basic and acidic residues. In terms of domain architecture, ASD1 spans Val708–Gly811. Residues Thr793–Asn808 are compositionally biased toward basic and acidic residues. Over residues Gln893–Asp903 the composition is skewed to polar residues. The span at Asn904–Ser915 shows a compositional bias: low complexity. Composition is skewed to polar residues over residues Glu1055–Asn1067, Glu1100–Gly1124, and Thr1211–Glu1263. Residues Pro1313 to Ser1323 are compositionally biased toward pro residues. Positions Ser1433–Leu1451 are enriched in polar residues. In terms of domain architecture, ASD2 spans Gln1467–Pro1756. Residues Ser1529 to Thr1538 are compositionally biased toward basic and acidic residues. Positions Arg1653–Leu1708 form a coiled coil.

It belongs to the shroom family. Interacts with F-actin. Interacts with ROCK1. Expressed in epithelial cells of the cement gland.

Its subcellular location is the cell junction. The protein resides in the adherens junction. The protein localises to the cytoplasm. It is found in the cytoskeleton. It localises to the apical cell membrane. Controls cell shape changes in the neuroepithelium during neural tube closure. Induces apical constriction in epithelial cells by promoting the apical accumulation of F-actin and myosin II, and probably by bundling stress fibers. Induces apicobasal cell elongation by redistributing gamma-tubulin and directing the assembly of robust apicobasal microtubule arrays. This Xenopus laevis (African clawed frog) protein is Protein Shroom3 (shroom3).